The following is a 373-amino-acid chain: Probable protein phosphatase 2C 73 (373 aa).

The 294-residue stretch at 61-354 (LASLFSKRGE…DDMSVVCLFL (294 aa)) folds into the PPM-type phosphatase domain. 4 residues coordinate Mn(2+): Asp-97, Gly-98, Asp-299, and Asp-345.

The protein belongs to the PP2C family. The cofactor is Mg(2+). Requires Mn(2+) as cofactor.

The catalysed reaction is O-phospho-L-seryl-[protein] + H2O = L-seryl-[protein] + phosphate. It carries out the reaction O-phospho-L-threonyl-[protein] + H2O = L-threonyl-[protein] + phosphate. This chain is Probable protein phosphatase 2C 73 (PPC6-7), found in Arabidopsis thaliana (Mouse-ear cress).